A 195-amino-acid chain; its full sequence is Obelin (195 aa).

The propeptide occupies 1-6; that stretch reads MASKYA. EF-hand domains lie at 17–52, 53–88, 110–145, and 146–181; these read KWIKRHKFMFDYLDINGNGQITLDEIVSKASDDICK, NLGATPAQTQRHQDCVEAFFRGCGLEYGKETKFPEF, LIREWGDAVFDIFDKDGSGTITLDEWKAYGRISGIS, and PSEEDCEKTFQHCDLDNSGELDVDEMTRQHLGFWYT. 5 residues coordinate Ca(2+): Asp-30, Asn-32, Asn-34, Gln-36, and Glu-41. The Ca(2+) site is built by Asp-123, Asp-125, Ser-127, Thr-129, Glu-134, Asp-159, Asp-161, Ser-163, Glu-165, and Glu-170.

The protein belongs to the aequorin family.

Ca(2+)-dependent bioluminescence photoprotein. Displays an emission peak at 495 nm (blue light). Trace amounts of calcium ion trigger the intramolecular oxidation of the chromophore, coelenterazine into coelenteramide and CO(2) with the concomitant emission of light. This Obelia geniculata (Knotted thread hydroid) protein is Obelin.